Here is a 292-residue protein sequence, read N- to C-terminus: 4-hydroxy-tetrahydrodipicolinate synthase (292 aa).

Threonine 45 contributes to the pyruvate binding site. Catalysis depends on tyrosine 133, which acts as the Proton donor/acceptor. Lysine 161 serves as the catalytic Schiff-base intermediate with substrate. Pyruvate is bound at residue isoleucine 203.

The protein belongs to the DapA family. As to quaternary structure, homotetramer; dimer of dimers.

Its subcellular location is the cytoplasm. It carries out the reaction L-aspartate 4-semialdehyde + pyruvate = (2S,4S)-4-hydroxy-2,3,4,5-tetrahydrodipicolinate + H2O + H(+). It functions in the pathway amino-acid biosynthesis; L-lysine biosynthesis via DAP pathway; (S)-tetrahydrodipicolinate from L-aspartate: step 3/4. Catalyzes the condensation of (S)-aspartate-beta-semialdehyde [(S)-ASA] and pyruvate to 4-hydroxy-tetrahydrodipicolinate (HTPA). In Salmonella paratyphi A (strain AKU_12601), this protein is 4-hydroxy-tetrahydrodipicolinate synthase.